Here is a 115-residue protein sequence, read N- to C-terminus: MSMDNIVRIIEKSQLKEVPEFRPGDTVRVHVKVKEGDKERIQAYEGVVISIRGSGISKTFTVRRISAGGIGVERIFPLYAPTIDKIEVVRRGRVRRAKLYYLRDVKGKVKIKERK.

The protein belongs to the bacterial ribosomal protein bL19 family.

Its function is as follows. This protein is located at the 30S-50S ribosomal subunit interface and may play a role in the structure and function of the aminoacyl-tRNA binding site. This is Large ribosomal subunit protein bL19 from Fervidobacterium nodosum (strain ATCC 35602 / DSM 5306 / Rt17-B1).